The following is an 86-amino-acid chain: Small ribosomal subunit protein bS16 (86 aa).

The protein belongs to the bacterial ribosomal protein bS16 family.

The sequence is that of Small ribosomal subunit protein bS16 from Borreliella afzelii (strain PKo) (Borrelia afzelii).